Reading from the N-terminus, the 283-residue chain is Lectin-like protein At1g53080 (283 aa).

Positions 1–23 are cleaved as a signal peptide; the sequence is MQIHKLCIFVLFISLLSSKTISA. Residues 24–277 are legume-lectin like; the sequence is VKFNFNRFDG…RHDIWSWSFE (254 aa). N-linked (GlcNAc...) asparagine glycosylation is found at Asn-84 and Asn-138. The residue at position 247 (Ser-247) is a Phosphoserine.

It belongs to the leguminous lectin family.

It is found in the secreted. The protein localises to the extracellular space. It localises to the apoplast. In Arabidopsis thaliana (Mouse-ear cress), this protein is Lectin-like protein At1g53080.